We begin with the raw amino-acid sequence, 298 residues long: tRNA dimethylallyltransferase (298 aa).

12-19 (GPTASGKT) provides a ligand contact to ATP. A substrate-binding site is contributed by 14–19 (TASGKT). The tract at residues 37-40 (DSRQ) is interaction with substrate tRNA.

The protein belongs to the IPP transferase family. In terms of assembly, monomer. The cofactor is Mg(2+).

The catalysed reaction is adenosine(37) in tRNA + dimethylallyl diphosphate = N(6)-dimethylallyladenosine(37) in tRNA + diphosphate. Catalyzes the transfer of a dimethylallyl group onto the adenine at position 37 in tRNAs that read codons beginning with uridine, leading to the formation of N6-(dimethylallyl)adenosine (i(6)A). The polypeptide is tRNA dimethylallyltransferase (Synechococcus sp. (strain CC9902)).